A 59-amino-acid polypeptide reads, in one-letter code: Large ribosomal subunit protein uL30 (59 aa).

This sequence belongs to the universal ribosomal protein uL30 family. In terms of assembly, part of the 50S ribosomal subunit.

In Buchnera aphidicola subsp. Acyrthosiphon kondoi (Acyrthosiphon kondoi symbiotic bacterium), this protein is Large ribosomal subunit protein uL30.